A 727-amino-acid polypeptide reads, in one-letter code: MGRRAKMVEKVKTLMETHEQIRNMGICAHIDHGKTTLSDNLLAGAGMISKELAGDQLALDFDEEEAARGITIYAANVSMVHEYSGKEYLINLIDTPGHVDFGGDVTRAMRAIDGAVVVCCAVEGVMPQTETVLRQALKEKVKPVLFINKVDRLINELKLTPEELQGRFMKIIAEVNKLIEKMAPEEFKKEWLCDVANGKVAFGSAYNNWAISVPYMQRSGISFKDIIDYCEQENQKELAEKAPLHEVVLDMSIKHLPNPLTAQKYRIPNIWKGDAESTIGKSMVACDPNGPLAGVVTKIIVDKHAGAISACRLFSGRIKQGDDLYLVGSKQKARAQQVSIFMGAERVQVPSISAGNICALTGLREATAGETVCSPSEILEPGFESLSHTSEPVITVAIEAKNTKDLPKLIEILRQIAREDNTVRVEINEETGEHLISGMGELHIEVITNTKIGRDGGIEVDVGEPIVVYRETIMGTSPEIEGKSPNKHNKLYMIAEPMEESVYAAYVEGKLHDEDYKKKTTADGEARLVEAGLEKDQAKKVMSIYNGNMIVNMTRGIVQLDEARELIIEGFKEGVRNGPLAAEKVQGVKIRLVDATFHEDAIHRGPAQIIPAVRFGVRDAVAQAKPVLLEPMQSVYINTPQDYMGDGMKEINNRRGQILDMEQEGDMSIIKSSVPVAEMFGFAGAIRGATQGRCLWSVEFSGFERVPNELQPKIAKQIRDRKGLKSE.

Residues 19 to 260 (EQIRNMGICA…MSIKHLPNPL (242 aa)) enclose the tr-type G domain. GTP-binding positions include 28-35 (AHIDHGKT), 94-98 (DTPGH), and 148-151 (NKVD). Histidine 603 is modified (diphthamide).

It belongs to the TRAFAC class translation factor GTPase superfamily. Classic translation factor GTPase family. EF-G/EF-2 subfamily.

Its subcellular location is the cytoplasm. Catalyzes the GTP-dependent ribosomal translocation step during translation elongation. During this step, the ribosome changes from the pre-translocational (PRE) to the post-translocational (POST) state as the newly formed A-site-bound peptidyl-tRNA and P-site-bound deacylated tRNA move to the P and E sites, respectively. Catalyzes the coordinated movement of the two tRNA molecules, the mRNA and conformational changes in the ribosome. The sequence is that of Elongation factor 2 from Methanococcus maripaludis (strain DSM 14266 / JCM 13030 / NBRC 101832 / S2 / LL).